Consider the following 215-residue polypeptide: Nucleoside triphosphate pyrophosphatase (215 aa).

Aspartate 77 functions as the Proton acceptor in the catalytic mechanism.

It belongs to the Maf family. It depends on a divalent metal cation as a cofactor.

The protein resides in the cytoplasm. The catalysed reaction is a ribonucleoside 5'-triphosphate + H2O = a ribonucleoside 5'-phosphate + diphosphate + H(+). The enzyme catalyses a 2'-deoxyribonucleoside 5'-triphosphate + H2O = a 2'-deoxyribonucleoside 5'-phosphate + diphosphate + H(+). Its function is as follows. Nucleoside triphosphate pyrophosphatase. May have a dual role in cell division arrest and in preventing the incorporation of modified nucleotides into cellular nucleic acids. This chain is Nucleoside triphosphate pyrophosphatase, found in Rickettsia africae (strain ESF-5).